A 328-amino-acid polypeptide reads, in one-letter code: 5,10-methylenetetrahydromethanopterin reductase (328 aa).

This sequence belongs to the mer family.

The protein resides in the cytoplasm. The enzyme catalyses 5-methyl-5,6,7,8-tetrahydromethanopterin + oxidized coenzyme F420-(gamma-L-Glu)(n) + H(+) = 5,10-methylenetetrahydromethanopterin + reduced coenzyme F420-(gamma-L-Glu)(n). The protein operates within one-carbon metabolism; methanogenesis from CO(2); methyl-coenzyme M from 5,10-methylene-5,6,7,8-tetrahydromethanopterin: step 1/2. Functionally, catalyzes the reversible reduction of methylene-H(4)MPT to methyl-H(4)MPT. This chain is 5,10-methylenetetrahydromethanopterin reductase, found in Methanosarcina mazei (strain ATCC BAA-159 / DSM 3647 / Goe1 / Go1 / JCM 11833 / OCM 88) (Methanosarcina frisia).